The following is a 191-amino-acid chain: Protein GrpE (191 aa).

Residues 1–22 (MKDKHNQEHDHLSQEEPESCEK) are disordered.

This sequence belongs to the GrpE family. In terms of assembly, homodimer.

The protein resides in the cytoplasm. In terms of biological role, participates actively in the response to hyperosmotic and heat shock by preventing the aggregation of stress-denatured proteins, in association with DnaK and GrpE. It is the nucleotide exchange factor for DnaK and may function as a thermosensor. Unfolded proteins bind initially to DnaJ; upon interaction with the DnaJ-bound protein, DnaK hydrolyzes its bound ATP, resulting in the formation of a stable complex. GrpE releases ADP from DnaK; ATP binding to DnaK triggers the release of the substrate protein, thus completing the reaction cycle. Several rounds of ATP-dependent interactions between DnaJ, DnaK and GrpE are required for fully efficient folding. This chain is Protein GrpE, found in Helicobacter pylori (strain Shi470).